We begin with the raw amino-acid sequence, 563 residues long: MEVFASVLNCCFKYIVLPVWIFIVLLLLHRDLSSWDGLMGPLSHPGLGENGSASYLSVPSWEIDEYTQGWRYYLYNSWLAERIPLRRSLPDLRDHRCQKLEYDEDSDEMKPASIIMIFRNEQLVVLLRTLHSLVERTPKYLYIELILVNDHSDTDFWNDKLSLIFFDNYVHRYIHPKARILHLPEQVGLIKARNLAASEAKAENLVFVDAQVEFTNGWLSPLLDTIAEQSYTLATPILDNLDEQTLAYQRSIERRGMYDWSLTRREVPLSRARRSHLPWPYEVAAVRTSVFAIPAVWFQDISNFDNNLRGFGAAELELSFKVWCTGGRIVQVPCSRVGHLQPKDEDYLKRYGDLHKMGEQKSRNLKRIIEVWTGDLKSAIYKYQPHLLNISEGDLNEPRKLYKQNECQSFKEFINDITPGLNHVAALNRTDYASGHVKTLEFPKKCLTINAKSQNLFLERCSTNNTLQNWTLTYVKDLRVAGNICAEVRPNLRLGYSFCHSLGGRQSWHYDSVSNQLMSNTKCLEFTDELNIFLAICDAANGKQRWILDNINLSVMQSANILV.

The Cytoplasmic segment spans residues 1–6 (MEVFAS). Residues 7 to 29 (VLNCCFKYIVLPVWIFIVLLLLH) traverse the membrane as a helical; Signal-anchor for type II membrane protein segment. Over 30–563 (RDLSSWDGLM…SVMQSANILV (534 aa)) the chain is Lumenal. Asparagine 50 carries an N-linked (GlcNAc...) asparagine glycan. Cysteines 97 and 334 form a disulfide. A catalytic subdomain A region spans residues 109–225 (MKPASIIMIF…NGWLSPLLDT (117 aa)). The catalytic subdomain B stretch occupies residues 280–342 (PYEVAAVRTS…PCSRVGHLQP (63 aa)). N-linked (GlcNAc...) asparagine glycans are attached at residues asparagine 389 and asparagine 428. Positions 433 to 549 (ASGHVKTLEF…ANGKQRWILD (117 aa)) constitute a Ricin B-type lectin domain. An intrachain disulfide couples cysteine 446 to cysteine 461. Asparagine 464 and asparagine 469 each carry an N-linked (GlcNAc...) asparagine glycan. 2 disulfides stabilise this stretch: cysteine 485-cysteine 499 and cysteine 523-cysteine 537. Asparagine 552 carries an N-linked (GlcNAc...) asparagine glycan.

This sequence belongs to the glycosyltransferase 2 family. GalNAc-T subfamily.

The protein resides in the golgi apparatus membrane. Its function is as follows. Probable inactive glycosyltransferase. The protein is Putative inactive polypeptide N-acetylgalactosaminyltransferase 12 (pgant12) of Drosophila melanogaster (Fruit fly).